Consider the following 250-residue polypeptide: MATMACASSLTFPSAQTQKSFFGTNVKQTPVLSFPRPTVAAAVAVSARKSTSASTKCTEEWRQLKEAVKKEFAIPHVPLDQRWMFTLEEATGPDIWNTTWYPKSADHVPTDKKWYVVDATDLILGRMASTIAIHIRGKNLASYTPSVDMGAFVIVVNADKVAVSGKKRTQKLYRRHSGRPGGLKEETFDQLQKRIPERIIEHAVRGMLPKGRLGRYLFNHLKVYKGAEHPHQAQQPIDLPLRDKRIRVEK.

The N-terminal 47 residues, 1-47, are a transit peptide targeting the chloroplast; the sequence is MATMACASSLTFPSAQTQKSFFGTNVKQTPVLSFPRPTVAAAVAVSA.

As to quaternary structure, component of the chloroplast large ribosomal subunit (LSU). Mature 70S chloroplast ribosomes of higher plants consist of a small (30S) and a large (50S) subunit. The 30S small subunit contains 1 molecule of ribosomal RNA (16S rRNA) and 24 different proteins. The 50S large subunit contains 3 rRNA molecules (23S, 5S and 4.5S rRNA) and 33 different proteins.

The protein resides in the plastid. The protein localises to the chloroplast. Its function is as follows. Component of the chloroplast ribosome (chloro-ribosome), a dedicated translation machinery responsible for the synthesis of chloroplast genome-encoded proteins, including proteins of the transcription and translation machinery and components of the photosynthetic apparatus. The chain is Large ribosomal subunit protein uL13c (RPL13) from Spinacia oleracea (Spinach).